The chain runs to 79 residues: Sec-independent protein translocase protein TatA (79 aa).

A helical membrane pass occupies residues M1–F21. The interval D46–S79 is disordered. Over residues K66 to S79 the composition is skewed to basic and acidic residues.

This sequence belongs to the TatA/E family. The Tat system comprises two distinct complexes: a TatABC complex, containing multiple copies of TatA, TatB and TatC subunits, and a separate TatA complex, containing only TatA subunits. Substrates initially bind to the TatABC complex, which probably triggers association of the separate TatA complex to form the active translocon.

It is found in the cell inner membrane. Its function is as follows. Part of the twin-arginine translocation (Tat) system that transports large folded proteins containing a characteristic twin-arginine motif in their signal peptide across membranes. TatA could form the protein-conducting channel of the Tat system. The chain is Sec-independent protein translocase protein TatA from Helicobacter pylori (strain HPAG1).